The sequence spans 209 residues: Large ribosomal subunit protein uL3 (209 aa).

The segment at 128-156 (FAGGSRTHGQSDRLRAPGSVGGSSDPSRT) is disordered.

The protein belongs to the universal ribosomal protein uL3 family. In terms of assembly, part of the 50S ribosomal subunit. Forms a cluster with proteins L14 and L19.

In terms of biological role, one of the primary rRNA binding proteins, it binds directly near the 3'-end of the 23S rRNA, where it nucleates assembly of the 50S subunit. This is Large ribosomal subunit protein uL3 from Prosthecochloris aestuarii (strain DSM 271 / SK 413).